Consider the following 247-residue polypeptide: MHTQVLFEHPLNEKMRTWLRIEFLIQQLSINLPIADHAGALHFFRNISDLLDVFERGEVRTELLKELERQQRKLQAWVEVPGVDQDRIEALRQQLKSAGSVLISAPRIGQQLREDRLIALVRQRLSIPGGCCSFDLPTLHIWLHLQQAQRDAQIETWLASLNPLTQALTLVLDLIRNSAPFRKQTSLNGFYQDNGDDADLLRLMLTLDSQLYPQISGHKSRFAIRFMPLDSENGLVPERLDFELACC.

Belongs to the ZapD family. Interacts with FtsZ.

Its subcellular location is the cytoplasm. Functionally, cell division factor that enhances FtsZ-ring assembly. Directly interacts with FtsZ and promotes bundling of FtsZ protofilaments, with a reduction in FtsZ GTPase activity. This chain is Cell division protein ZapD, found in Salmonella choleraesuis (strain SC-B67).